Here is a 213-residue protein sequence, read N- to C-terminus: MEDPKGAWQSDVFDNGRDFKPHDKAPANVTAGTTPPMYNVGAGGSEGNSKALSIISIVLRCLSIMFNVVSLGVIASNQGKSYFVVWRTLNSSNMQYLFAINVIVLVYCVVQLILSIINLVQGKMVLSGPTQPASTITYICDQGLTYMLMAGFGAGVALQASVDKGESGMLDCSGANEFCGKNKASAALSFLGFVCIALSANLNYLRLYFMAAK.

Positions 1–26 (MEDPKGAWQSDVFDNGRDFKPHDKAP) are disordered. Topologically, residues 1–53 (MEDPKGAWQSDVFDNGRDFKPHDKAPANVTAGTTPPMYNVGAGGSEGNSKALS) are cytoplasmic. Positions 14-25 (DNGRDFKPHDKA) are enriched in basic and acidic residues. Residues 54–74 (IISIVLRCLSIMFNVVSLGVI) traverse the membrane as a helical segment. Over 75-96 (ASNQGKSYFVVWRTLNSSNMQY) the chain is Extracellular. N-linked (GlcNAc...) asparagine glycosylation is present at Asn90. Residues 97-117 (LFAINVIVLVYCVVQLILSII) form a helical membrane-spanning segment. Topologically, residues 118 to 137 (NLVQGKMVLSGPTQPASTIT) are cytoplasmic. Residues 138 to 158 (YICDQGLTYMLMAGFGAGVAL) form a helical membrane-spanning segment. The Extracellular portion of the chain corresponds to 159–184 (QASVDKGESGMLDCSGANEFCGKNKA). Residues 185-205 (SAALSFLGFVCIALSANLNYL) form a helical membrane-spanning segment. At 206 to 213 (RLYFMAAK) the chain is on the cytoplasmic side.

The protein belongs to the Casparian strip membrane proteins (CASP) family. As to quaternary structure, homodimer and heterodimers.

The protein resides in the cell membrane. This is CASP-like protein UU2 from Physcomitrium patens (Spreading-leaved earth moss).